The sequence spans 184 residues: ATP synthase subunit b, chloroplastic (184 aa).

Residues 27–49 (LATNLINLSVVIGVLIFFGKGVL) form a helical membrane-spanning segment.

The protein belongs to the ATPase B chain family. In terms of assembly, F-type ATPases have 2 components, F(1) - the catalytic core - and F(0) - the membrane proton channel. F(1) has five subunits: alpha(3), beta(3), gamma(1), delta(1), epsilon(1). F(0) has four main subunits: a(1), b(1), b'(1) and c(10-14). The alpha and beta chains form an alternating ring which encloses part of the gamma chain. F(1) is attached to F(0) by a central stalk formed by the gamma and epsilon chains, while a peripheral stalk is formed by the delta, b and b' chains.

It is found in the plastid. It localises to the chloroplast thylakoid membrane. Its function is as follows. F(1)F(0) ATP synthase produces ATP from ADP in the presence of a proton or sodium gradient. F-type ATPases consist of two structural domains, F(1) containing the extramembraneous catalytic core and F(0) containing the membrane proton channel, linked together by a central stalk and a peripheral stalk. During catalysis, ATP synthesis in the catalytic domain of F(1) is coupled via a rotary mechanism of the central stalk subunits to proton translocation. Functionally, component of the F(0) channel, it forms part of the peripheral stalk, linking F(1) to F(0). In Jasminum nudiflorum (Winter jasmine), this protein is ATP synthase subunit b, chloroplastic.